The primary structure comprises 368 residues: Anhydro-N-acetylmuramic acid kinase (368 aa).

Residue 13-20 coordinates ATP; the sequence is GTSLDGVD.

This sequence belongs to the anhydro-N-acetylmuramic acid kinase family.

The catalysed reaction is 1,6-anhydro-N-acetyl-beta-muramate + ATP + H2O = N-acetyl-D-muramate 6-phosphate + ADP + H(+). It functions in the pathway amino-sugar metabolism; 1,6-anhydro-N-acetylmuramate degradation. It participates in cell wall biogenesis; peptidoglycan recycling. Functionally, catalyzes the specific phosphorylation of 1,6-anhydro-N-acetylmuramic acid (anhMurNAc) with the simultaneous cleavage of the 1,6-anhydro ring, generating MurNAc-6-P. Is required for the utilization of anhMurNAc either imported from the medium or derived from its own cell wall murein, and thus plays a role in cell wall recycling. This is Anhydro-N-acetylmuramic acid kinase from Hahella chejuensis (strain KCTC 2396).